The sequence spans 300 residues: Tyrosine recombinase XerC (300 aa).

The Core-binding (CB) domain maps to 1 to 86 (MESVLDAFDQ…AVKTFTAWAV (86 aa)). Residues 107–294 (TLPAVLRQDQ…TVARLRAVHD (188 aa)) enclose the Tyr recombinase domain. Residues R151, K175, H246, R249, and H272 contribute to the active site. Catalysis depends on Y281, which acts as the O-(3'-phospho-DNA)-tyrosine intermediate.

It belongs to the 'phage' integrase family. XerC subfamily. In terms of assembly, forms a cyclic heterotetrameric complex composed of two molecules of XerC and two molecules of XerD.

Its subcellular location is the cytoplasm. Functionally, site-specific tyrosine recombinase, which acts by catalyzing the cutting and rejoining of the recombining DNA molecules. The XerC-XerD complex is essential to convert dimers of the bacterial chromosome into monomers to permit their segregation at cell division. It also contributes to the segregational stability of plasmids. The protein is Tyrosine recombinase XerC of Mycobacterium sp. (strain KMS).